A 1310-amino-acid chain; its full sequence is Angiotensin-converting enzyme (1310 aa).

The first 33 residues, 1 to 33 (MGAAPGRRGPRLLRPPPPLLLLLLLLRPPPAAL), serve as a signal peptide directing secretion. Over 34–1260 (TLDPGLLPGD…GMNLDAQQAR (1227 aa)) the chain is Extracellular. Peptidase M2 domains lie at 45-628 (AADE…LGWP) and 647-1226 (VTDE…LGWP). Residues asparagine 59, asparagine 79, and asparagine 151 are each glycosylated (N-linked (GlcNAc...) asparagine). Residues cysteine 162 and cysteine 170 are joined by a disulfide bond. Tyrosine 236 contributes to the chloride binding site. Asparagine 323 carries N-linked (GlcNAc...) asparagine glycosylation. Cysteine 364 and cysteine 382 are disulfide-bonded. Residue histidine 395 participates in Zn(2+) binding. Glutamate 396 acts as the Proton acceptor 1 in catalysis. Zn(2+) is bound by residues histidine 399 and glutamate 422. Asparagine 449 and asparagine 513 each carry an N-linked (GlcNAc...) asparagine glycan. The Proton donor 1 role is filled by histidine 524. Arginine 533 contributes to the chloride binding site. The cysteines at positions 549 and 561 are disulfide-linked. Residues asparagine 681, asparagine 699, and asparagine 718 are each glycosylated (N-linked (GlcNAc...) asparagine). Residues cysteine 761 and cysteine 767 are joined by a disulfide bond. Chloride is bound by residues arginine 795 and tyrosine 833. The N-linked (GlcNAc...) asparagine glycan is linked to asparagine 946. An intrachain disulfide couples cysteine 961 to cysteine 979. Histidine 992 is a Zn(2+) binding site. Glutamate 993 acts as the Proton acceptor 2 in catalysis. Positions 996 and 1020 each coordinate Zn(2+). Positions 1094 and 1098 each coordinate chloride. Histidine 1122 (proton donor 2) is an active-site residue. Residue arginine 1131 coordinates chloride. Cysteine 1147 and cysteine 1159 are joined by a disulfide. Asparagine 1195 carries N-linked (GlcNAc...) asparagine glycosylation. Positions 1219-1260 (HGEKLGWPQYTWTPNSARSEGSLPDSGRVNFLGMNLDAQQAR) are juxtamembrane stalk. A helical membrane pass occupies residues 1261 to 1281 (VGQWVLLFLGVALLLASLGLT). Over 1282 to 1310 (QRLFSIRYQSLRQPHHGPQFGSEVELRHS) the chain is Cytoplasmic. Residue serine 1303 is modified to Phosphoserine.

Belongs to the peptidase M2 family. As to quaternary structure, monomer and homodimer; homodimerizes following binding to an inhibitor. Interacts with calmodulin (CALM1, CALM2 or CALM3); interaction takes place in the cytoplasmic region and regulates phosphorylation and proteolytic cleavage. It depends on Zn(2+) as a cofactor. Chloride is required as a cofactor. N-glycosylated. Post-translationally, phosphorylated by CK2 on Ser-1303; which allows membrane retention. Phosphorylated on tyrosine residues on its extracellular part, promoting cleavage by secretase enzymes and formation of the soluble form (Angiotensin-converting enzyme, soluble form). In terms of processing, produced following proteolytic cleavage by secretase enzymes that cleave the transmembrane form in the juxtamembrane stalk region upstream of the transmembrane region. Cleavage can take place at different sites of the juxtamembrane stalk region. Testis-specific isoform is expressed in spermatocytes, adult testis.

The protein localises to the cell membrane. The protein resides in the cytoplasm. Its subcellular location is the secreted. It carries out the reaction Release of a C-terminal dipeptide, oligopeptide-|-Xaa-Yaa, when Xaa is not Pro, and Yaa is neither Asp nor Glu. Thus, conversion of angiotensin I to angiotensin II, with increase in vasoconstrictor activity, but no action on angiotensin II.. The catalysed reaction is angiotensin I + H2O = L-histidyl-L-leucine + angiotensin II. The enzyme catalyses bradykinin + H2O = L-Phe-L-Arg + bradykinin(1-7). It catalyses the reaction substance P + H2O = substance P(1-9) + L-Leu-L-Met-NH2. It carries out the reaction substance P + H2O = substance P(1-8) + Gly-L-Leu-L-Met-NH2. The catalysed reaction is substance P + H2O = L-Phe-L-Phe-Gly-L-Leu-L-Met-NH2 + substance P(1-6). The enzyme catalyses neurotensin + H2O = neurotensin(1-11) + L-isoleucyl-L-leucine. It catalyses the reaction goralatide + H2O = N-acetyl-L-seryl-L-aspartate + L-lysyl-L-proline. It carries out the reaction Met-enkephalin + H2O = L-phenylalanyl-L-methionine + L-tyrosylglycylglycine. The catalysed reaction is Leu-enkephalin + H2O = L-tyrosylglycylglycine + L-phenylalanyl-L-leucine. The enzyme catalyses Met-enkephalin-Arg-Phe + H2O = L-arginyl-L-phenylalanine + Met-enkephalin. The dipeptidyl carboxypeptidase activity is strongly activated by chloride. Specifically inhibited by lisinopril. Inhibited by mixanpril, an orally-active drug used for the treatment of hypertension. Its activity is regulated as follows. Strongly inhibited by lisinopril and captopril. In terms of biological role, dipeptidyl carboxypeptidase that removes dipeptides from the C-terminus of a variety of circulating hormones, such as angiotensin I, bradykinin or enkephalins, thereby playing a key role in the regulation of blood pressure, electrolyte homeostasis or synaptic plasticity. Composed of two similar catalytic domains, each possessing a functional active site, with different selectivity for substrates. Plays a major role in the angiotensin-renin system that regulates blood pressure and sodium retention by the kidney by converting angiotensin I to angiotensin II, resulting in an increase of the vasoconstrictor activity of angiotensin. Also able to inactivate bradykinin, a potent vasodilator, and therefore enhance the blood pressure response. Acts as a regulator of synaptic transmission by mediating cleavage of neuropeptide hormones, such as substance P, neurotensin or enkephalins. Catalyzes degradation of different enkephalin neuropeptides (Met-enkephalin, Leu-enkephalin, Met-enkephalin-Arg-Phe and possibly Met-enkephalin-Arg-Gly-Leu). Acts as a regulator of synaptic plasticity in the nucleus accumbens of the brain by mediating cleavage of Met-enkephalin-Arg-Phe, a strong ligand of Mu-type opioid receptor OPRM1, into Met-enkephalin. Met-enkephalin-Arg-Phe cleavage by ACE decreases activation of OPRM1, leading to long-term synaptic potentiation of glutamate release. Also acts as a regulator of hematopoietic stem cell differentiation by mediating degradation of hemoregulatory peptide N-acetyl-SDKP (AcSDKP). Acts as a regulator of cannabinoid signaling pathway by mediating degradation of hemopressin, an antagonist peptide of the cannabinoid receptor CNR1. Involved in amyloid-beta metabolism by catalyzing degradation of Amyloid-beta protein 40 and Amyloid-beta protein 42 peptides, thereby preventing plaque formation. Catalyzes cleavage of cholecystokinin (maturation of Cholecystokinin-8 and Cholecystokinin-5) and Gonadoliberin-1 (both maturation and degradation) hormones. Degradation of hemoregulatory peptide N-acetyl-SDKP (AcSDKP) and amyloid-beta proteins is mediated by the N-terminal catalytic domain, while angiotensin I and cholecystokinin cleavage is mediated by the C-terminal catalytic region. Functionally, soluble form that is released in blood plasma and other body fluids following proteolytic cleavage in the juxtamembrane stalk region. Its function is as follows. Isoform produced by alternative promoter usage that is specifically expressed in spermatocytes and adult testis, and which is required for male fertility. In contrast to somatic isoforms, only contains one catalytic domain. Acts as a dipeptidyl carboxypeptidase that removes dipeptides from the C-terminus of substrates. The identity of substrates that are needed for male fertility is unknown. May also have a glycosidase activity which releases GPI-anchored proteins from the membrane by cleaving the mannose linkage in the GPI moiety. The GPIase activity was reported to be essential for the egg-binding ability of the sperm. This activity is however unclear and has been challenged by other groups, suggesting that it may be indirect. This chain is Angiotensin-converting enzyme, found in Oryctolagus cuniculus (Rabbit).